Reading from the N-terminus, the 90-residue chain is Guanine nucleotide-binding protein subunit gamma (90 aa).

A lipid anchor (S-palmitoyl cysteine) is attached at cysteine 86. Cysteine 87 bears the Cysteine methyl ester mark. Cysteine 87 carries the S-farnesyl cysteine lipid modification. A propeptide spans 88-90 (TIM) (removed in mature form).

The protein belongs to the G protein gamma family. As to quaternary structure, g proteins are composed of 3 units, alpha, beta and gamma.

Its subcellular location is the membrane. The sequence is that of Guanine nucleotide-binding protein subunit gamma from Kluyveromyces lactis (strain ATCC 8585 / CBS 2359 / DSM 70799 / NBRC 1267 / NRRL Y-1140 / WM37) (Yeast).